Here is a 265-residue protein sequence, read N- to C-terminus: Glutamate racemase (265 aa).

Substrate is bound by residues 9–10 (DS) and 41–42 (YG). Cys72 acts as the Proton donor/acceptor in catalysis. 73–74 (NT) lines the substrate pocket. Cys183 functions as the Proton donor/acceptor in the catalytic mechanism. A substrate-binding site is contributed by 184 to 185 (TH).

This sequence belongs to the aspartate/glutamate racemases family.

It carries out the reaction L-glutamate = D-glutamate. Its pathway is cell wall biogenesis; peptidoglycan biosynthesis. Functionally, provides the (R)-glutamate required for cell wall biosynthesis. This chain is Glutamate racemase, found in Lysinibacillus sphaericus (Bacillus sphaericus).